The chain runs to 123 residues: Immunoglobulin lambda variable 5-39 (123 aa).

A signal peptide spans 1–19; it reads MAWTPLLLLLLSHCTGSLS. Residues 20–44 are framework-1; the sequence is QPVLTQPTSLSASPGASARFTCTLR. Residues 21–123 enclose the Ig-like domain; the sequence is PVLTQPTSLS…YCAIWYSSTS (103 aa). Cys41 and Cys115 form a disulfide bridge. Residues 45-53 form a complementarity-determining-1 region; sequence SGINVGTYR. The framework-2 stretch occupies residues 54 to 70; the sequence is IYWYQQKPGSLPRYLLR. Residues 71–77 form a complementarity-determining-2 region; sequence YKSDSDK. The interval 78–115 is framework-3; the sequence is QQGSGVPSRFSGSKDASTNAGLLLISGLQSEDEADYYC. The interval 116 to 123 is complementarity-determining-3; it reads AIWYSSTS.

As to quaternary structure, immunoglobulins are composed of two identical heavy chains and two identical light chains; disulfide-linked.

It localises to the secreted. It is found in the cell membrane. Its function is as follows. V region of the variable domain of immunoglobulin light chains that participates in the antigen recognition. Immunoglobulins, also known as antibodies, are membrane-bound or secreted glycoproteins produced by B lymphocytes. In the recognition phase of humoral immunity, the membrane-bound immunoglobulins serve as receptors which, upon binding of a specific antigen, trigger the clonal expansion and differentiation of B lymphocytes into immunoglobulins-secreting plasma cells. Secreted immunoglobulins mediate the effector phase of humoral immunity, which results in the elimination of bound antigens. The antigen binding site is formed by the variable domain of one heavy chain, together with that of its associated light chain. Thus, each immunoglobulin has two antigen binding sites with remarkable affinity for a particular antigen. The variable domains are assembled by a process called V-(D)-J rearrangement and can then be subjected to somatic hypermutations which, after exposure to antigen and selection, allow affinity maturation for a particular antigen. In Homo sapiens (Human), this protein is Immunoglobulin lambda variable 5-39.